We begin with the raw amino-acid sequence, 598 residues long: Nuclear receptor subfamily 4 group A member 1 (598 aa).

2 disordered regions span residues Met1 to Leu50 and Leu120 to Gly159. Low complexity-rich tracts occupy residues Leu37–Leu50 and Ser134–Ser145. The required for nuclear import stretch occupies residues Arg171–Ser466. The nuclear receptor DNA-binding region spans Glu264–Thr339. 2 consecutive NR C4-type zinc fingers follow at residues Cys267 to Cys287 and Cys303 to Cys327. The tract at residues Ala268–Lys354 is required for binding NBRE-containing DNA. A required for the interaction with RXRA region spans residues Ala299 to Pro361. Ser341 carries the post-translational modification Phosphoserine; by PKA. Residues Ser341 to Pro361 form a disordered region. Residue Ser351 is modified to Phosphoserine; by PKA, RPS6KA1 and RPS6KA3. The NR LBD domain occupies Ser360–Thr595. The segment at Pro521–Gly544 is binds lipopolysaccharide. The AF-2 stretch occupies residues Pro584–Thr595.

It belongs to the nuclear hormone receptor family. NR4 subfamily. In terms of assembly, binds the NGFI-B response element (NBRE) as a monomer. Binds the Nur response element (NurRE), consisting of two inverse NBRE-related octanucleotide repeats separated by 6 base-pairs, as a dimer. Interacts (via N-terminus) with NLRP3 (via LRR repeat domain); the interaction is direct, requires binding of NR4A1/Nur77 to NBRE-containing dsDNA and lipopolysaccharide, and leads to non-canonical NLRP3 inflammasome activation. Interacts with GADD45GIP1. Interacts with STK11. Heterodimer (via DNA-binding domain) with RXRA (via C-terminus); DNA-binding of the heterodimer is enhanced by 9-cis retinoic acid. Competes for the RXRA interaction with EP300 and thereby attenuates EP300 mediated acetylation of RXRA. Interacts with NCOA1. Interacts with NCOA2. Interacts with NCOA3. Requires Zn(2+) as cofactor. In terms of processing, phosphorylated at Ser-351 by RPS6KA1 and RPS6KA3 in response to mitogenic or stress stimuli. Acetylated by p300/CBP, acetylation increases stability. Deacetylated by HDAC1.

The protein localises to the cytoplasm. It is found in the cytosol. Its subcellular location is the nucleus. The protein resides in the mitochondrion. In terms of biological role, orphan nuclear receptor. Binds the NGFI-B response element (NBRE) 5'-AAAGGTCA-3'. Binds 9-cis-retinoic acid outside of its ligand-binding (NR LBD) domain. Participates in energy homeostasis by sequestrating the kinase STK11 in the nucleus, thereby attenuating cytoplasmic AMPK activation. Regulates the inflammatory response in macrophages by regulating metabolic adaptations during inflammation, including repressing the transcription of genes involved in the citric acid cycle (TCA). Inhibits NF-kappa-B signaling by binding to low-affinity NF-kappa-B binding sites, such as at the IL2 promoter. May act concomitantly with NR4A2 in regulating the expression of delayed-early genes during liver regeneration. Plays a role in the vascular response to injury. In the cytosol, upon its detection of both bacterial lipopolysaccharide (LPS) and NBRE-containing mitochondrial DNA released by GSDMD pores during pyroptosis, it promotes non-canonical NLRP3 inflammasome activation by stimulating association of NLRP3 and NEK7. The chain is Nuclear receptor subfamily 4 group A member 1 (NR4A1) from Canis lupus familiaris (Dog).